We begin with the raw amino-acid sequence, 695 residues long: Protein MALE DISCOVERER 1 (695 aa).

The signal sequence occupies residues 1 to 29; that stretch reads MGCRWNPIGFQFSCFMFLIITLQSRSSLS. Over 30-340 the chain is Extracellular; it reads LESEGFVLLK…SKGFKDVWLY (311 aa). Residues asparagine 56 and asparagine 80 are each glycosylated (N-linked (GlcNAc...) asparagine). LRR repeat units follow at residues 75 to 98, 99 to 121, 123 to 144, and 147 to 168; these read KVQM…SQLS, ELRS…FASF, KLEF…ELNK, and TPEN…KFLR. N-linked (GlcNAc...) asparagine glycosylation is present at asparagine 247. The segment at 302-325 is disordered; the sequence is PPLIPPSSPPPLPTNNTIASDPPR. Positions 303–314 are enriched in pro residues; the sequence is PLIPPSSPPPLP. A glycan (N-linked (GlcNAc...) asparagine) is linked at asparagine 316. The helical transmembrane segment at 341–361 threads the bilayer; it reads VVIGVAAFVAMLIIVAVIFFF. Residues 362–695 are Cytoplasmic-facing; sequence RKRAVKSIGP…ELEILSSEAT (334 aa). A Protein kinase domain is found at 363 to 668; sequence KRAVKSIGPW…YVVQQLKEVI (306 aa). Serine 652 is modified (phosphoserine).

This sequence belongs to the protein kinase superfamily. Ser/Thr protein kinase family. Homodimer. Interacts with MIK1, MIK2 and LURE1.2. LURE1.2 enhances the heterodimerization of MDIS1 with MIK1 or MIK2. In terms of processing, phosphorylated by MIK1. As to expression, expressed in pollen tubes and seedlings.

It localises to the cell membrane. Its subcellular location is the endomembrane system. The catalysed reaction is L-seryl-[protein] + ATP = O-phospho-L-seryl-[protein] + ADP + H(+). The enzyme catalyses L-threonyl-[protein] + ATP = O-phospho-L-threonyl-[protein] + ADP + H(+). Its function is as follows. Involved in the pollen tube perception of the female signal. The protein is Protein MALE DISCOVERER 1 of Arabidopsis thaliana (Mouse-ear cress).